The sequence spans 271 residues: Undecaprenyl-diphosphatase (271 aa).

The next 8 helical transmembrane spans lie at 5-25 (YALF…FLPV), 45-65 (AATF…AVFW), 86-106 (TLSL…GLGI), 114-134 (LFGP…LIIA), 149-169 (ISYK…WPGF), 189-209 (AAEF…GLDL), 226-246 (VGFI…LALI), and 251-271 (FIPF…VFVA).

It belongs to the UppP family.

The protein resides in the cell inner membrane. The catalysed reaction is di-trans,octa-cis-undecaprenyl diphosphate + H2O = di-trans,octa-cis-undecaprenyl phosphate + phosphate + H(+). Functionally, catalyzes the dephosphorylation of undecaprenyl diphosphate (UPP). Confers resistance to bacitracin. This is Undecaprenyl-diphosphatase from Aeromonas salmonicida (strain A449).